Reading from the N-terminus, the 877-residue chain is Alanine--tRNA ligase (877 aa).

Zn(2+) is bound by residues histidine 567, histidine 571, cysteine 669, and histidine 673.

It belongs to the class-II aminoacyl-tRNA synthetase family. It depends on Zn(2+) as a cofactor.

It localises to the cytoplasm. It carries out the reaction tRNA(Ala) + L-alanine + ATP = L-alanyl-tRNA(Ala) + AMP + diphosphate. Functionally, catalyzes the attachment of alanine to tRNA(Ala) in a two-step reaction: alanine is first activated by ATP to form Ala-AMP and then transferred to the acceptor end of tRNA(Ala). Also edits incorrectly charged Ser-tRNA(Ala) and Gly-tRNA(Ala) via its editing domain. The sequence is that of Alanine--tRNA ligase from Rickettsia bellii (strain RML369-C).